A 132-amino-acid chain; its full sequence is Agouti-signaling protein (132 aa).

The signal sequence occupies residues 1–22 (MDVTRLLLATLLVFLCFFTAYS). Residue asparagine 39 is glycosylated (N-linked (GlcNAc...) asparagine). Residues 61–79 (EISRKEAEKKRSSKKEASM) are compositionally biased toward basic and acidic residues. The tract at residues 61-87 (EISRKEAEKKRSSKKEASMKKVARPRT) is disordered. Cystine bridges form between cysteine 93–cysteine 108, cysteine 100–cysteine 114, cysteine 107–cysteine 125, cysteine 111–cysteine 132, and cysteine 116–cysteine 123. The 40-residue stretch at 93-132 (CVATRDSCKPPAPACCDPCASCQCRFFRSACSCRVLSLNC) folds into the Agouti domain.

The protein resides in the secreted. Involved in the regulation of melanogenesis. The binding of ASP to MC1R precludes alpha-MSH initiated signaling and thus blocks production of cAMP, leading to a down-regulation of eumelanogenesis (brown/black pigment) and thus increasing synthesis of pheomelanin (yellow/red pigment). This chain is Agouti-signaling protein (ASIP), found in Macaca fascicularis (Crab-eating macaque).